The primary structure comprises 361 residues: tRNA-specific 2-thiouridylase MnmA (361 aa).

Residues 8 to 15 (AMSGGVDS) and Met35 each bind ATP. The tract at residues 95–97 (NPD) is interaction with target base in tRNA. Residue Cys100 is the Nucleophile of the active site. A disulfide bond links Cys100 and Cys196. Gly124 contributes to the ATP binding site. The tract at residues 146-148 (KDQ) is interaction with tRNA. Residue Cys196 is the Cysteine persulfide intermediate of the active site. An interaction with tRNA region spans residues 303 to 304 (RY).

Belongs to the MnmA/TRMU family.

Its subcellular location is the cytoplasm. It carries out the reaction S-sulfanyl-L-cysteinyl-[protein] + uridine(34) in tRNA + AH2 + ATP = 2-thiouridine(34) in tRNA + L-cysteinyl-[protein] + A + AMP + diphosphate + H(+). Functionally, catalyzes the 2-thiolation of uridine at the wobble position (U34) of tRNA, leading to the formation of s(2)U34. The chain is tRNA-specific 2-thiouridylase MnmA from Chlamydia pneumoniae (Chlamydophila pneumoniae).